The sequence spans 304 residues: Mitochondrial glycine transporter (304 aa).

Solcar repeat units follow at residues 25-114, 121-205, and 215-299; these read HPVI…LKQY, PTAL…TKNI, and LIPI…MMAK. The next 6 membrane-spanning stretches (helical) occupy residues 31-56, 89-115, 127-152, 180-203, 219-245, and 274-292; these read FLCG…TRLQ, GMSP…KQYF, VMLG…TRYE, GLTA…NQTK, TNFS…KTHM, and GGIP…AWTV.

This sequence belongs to the mitochondrial carrier (TC 2.A.29) family. SLC25A38 subfamily. As to expression, preferentially expressed in erythroid cells.

Its subcellular location is the mitochondrion inner membrane. It carries out the reaction glycine(in) = glycine(out). Functionally, mitochondrial glycine transporter that imports glycine into the mitochondrial matrix. Plays an important role in providing glycine for the first enzymatic step in heme biosynthesis, the condensation of glycine with succinyl-CoA to produce 5-aminolevulinate (ALA) in the mitochondrial matrix. Required during erythropoiesis. Its function is as follows. Plays a role as pro-apoptotic protein that induces caspase-dependent apoptosis. This chain is Mitochondrial glycine transporter, found in Homo sapiens (Human).